Consider the following 327-residue polypeptide: Phenylalanine--tRNA ligase alpha subunit (327 aa).

Mg(2+) is bound at residue Glu-252.

This sequence belongs to the class-II aminoacyl-tRNA synthetase family. Phe-tRNA synthetase alpha subunit type 1 subfamily. As to quaternary structure, tetramer of two alpha and two beta subunits. Mg(2+) serves as cofactor.

The protein localises to the cytoplasm. The catalysed reaction is tRNA(Phe) + L-phenylalanine + ATP = L-phenylalanyl-tRNA(Phe) + AMP + diphosphate + H(+). The protein is Phenylalanine--tRNA ligase alpha subunit of Glaesserella parasuis serovar 5 (strain SH0165) (Haemophilus parasuis).